The following is a 557-amino-acid chain: Glutamyl-tRNA(Gln) amidotransferase subunit B, mitochondrial (557 aa).

A mitochondrion-targeting transit peptide spans 1 to 41 (MAAPMLRWGCRGRRWAFARVDGGSCHRRGAPTGSTSNQIRG). Residues 26–45 (HRRGAPTGSTSNQIRGESSV) are disordered. Over residues 32–45 (TGSTSNQIRGESSV) the composition is skewed to polar residues. The residue at position 529 (lysine 529) is an N6-succinyllysine.

It belongs to the GatB/GatE family. GatB subfamily. In terms of assembly, subunit of the heterotrimeric GatCAB amidotransferase (AdT) complex, composed of A (QRSL1), B (GATB) and C (GATC) subunits. Predominantly expressed in tissues characterized by high rates of oxidative phosphorylation (OxPhos), including muscle and heart.

The protein resides in the mitochondrion. The enzyme catalyses L-glutamyl-tRNA(Gln) + L-glutamine + ATP + H2O = L-glutaminyl-tRNA(Gln) + L-glutamate + ADP + phosphate + H(+). Functionally, allows the formation of correctly charged Gln-tRNA(Gln) through the transamidation of misacylated Glu-tRNA(Gln) in the mitochondria. The reaction takes place in the presence of glutamine and ATP through an activated gamma-phospho-Glu-tRNA(Gln). This Homo sapiens (Human) protein is Glutamyl-tRNA(Gln) amidotransferase subunit B, mitochondrial.